The chain runs to 867 residues: Armadillo repeat-containing protein 2 (867 aa).

Disordered stretches follow at residues 1–115 (MLSP…CFSF) and 214–252 (TSLP…AVPK). 3 stretches are compositionally biased toward polar residues: residues 18-28 (PSVSKQKTSAE), 40-50 (VRTQRPFTPQE), and 60-69 (SSRTSENRPP). Composition is skewed to low complexity over residues 70–81 (SSFSLHASSFES) and 234–243 (SSCPSSSDLS). 12 ARM repeats span residues 262–301 (IEVD…HALE), 304–344 (NMLG…ALKV), 363–403 (EKND…SIKF), 408–449 (LGFL…HLLV), 462–503 (SLVR…KLTS), 506–547 (DCCT…NLTA), 551–589 (QARE…QRGE), 591–616 (HRAQ…NIAI), 619–662 (GVGP…NLSY), 664–705 (QVKN…NLSQ), 707–746 (HDVC…NLTV), and 748–790 (KDKR…NFSE).

In terms of tissue distribution, expressed at higher level in testis.

Functionally, required for sperm flagellum axoneme organization and function. Involved in axonemal central pair complex assembly and/or stability. The sequence is that of Armadillo repeat-containing protein 2 from Homo sapiens (Human).